The primary structure comprises 570 residues: Enhancer of polycomb-like protein 1 (570 aa).

A disordered region spans residues 541–570; the sequence is ALNNLNSGQTSGQTMGSNPGPGAIAPTPET. Residues 543-557 are compositionally biased toward polar residues; it reads NNLNSGQTSGQTMGS.

Belongs to the enhancer of polycomb family. As to quaternary structure, component of the NuA4 histone acetyltransferase complex.

It localises to the nucleus. Component of the NuA4 histone acetyltransferase complex which is involved in transcriptional activation of selected genes principally by acetylation of nucleosomal histone H4 and H2A. The NuA4 complex is also involved in DNA repair. Involved in gene silencing by neighboring heterochromatin, blockage of the silencing spreading along the chromosome, and required for cell cycle progression through G2/M. The protein is Enhancer of polycomb-like protein 1 (epl1) of Emericella nidulans (strain FGSC A4 / ATCC 38163 / CBS 112.46 / NRRL 194 / M139) (Aspergillus nidulans).